Here is a 392-residue protein sequence, read N- to C-terminus: Lipid-A-disaccharide synthase (392 aa).

This sequence belongs to the LpxB family.

The enzyme catalyses a lipid X + a UDP-2-N,3-O-bis[(3R)-3-hydroxyacyl]-alpha-D-glucosamine = a lipid A disaccharide + UDP + H(+). Its pathway is bacterial outer membrane biogenesis; LPS lipid A biosynthesis. Condensation of UDP-2,3-diacylglucosamine and 2,3-diacylglucosamine-1-phosphate to form lipid A disaccharide, a precursor of lipid A, a phosphorylated glycolipid that anchors the lipopolysaccharide to the outer membrane of the cell. The protein is Lipid-A-disaccharide synthase of Syntrophotalea carbinolica (strain DSM 2380 / NBRC 103641 / GraBd1) (Pelobacter carbinolicus).